An 828-amino-acid polypeptide reads, in one-letter code: USP6 N-terminal-like protein (828 aa).

Met1 carries the N-acetylmethionine modification. One can recognise a Rab-GAP TBC domain in the interval 100–292 (GIPLQLRGEV…RIWDIYIFEG (193 aa)). Residues 355-367 (DLPEPGKEDEYPK) show a composition bias toward basic and acidic residues. A disordered region spans residues 355–722 (DLPEPGKEDE…NSGSPKNGKL (368 aa)). Ser391, Ser396, and Ser400 each carry phosphoserine. The segment covering 434-451 (KSVEEESKKLKDEADFQR) has biased composition (basic and acidic residues). Positions 465-478 (NHAAANQNSNATSN) are enriched in low complexity. 2 stretches are compositionally biased toward basic and acidic residues: residues 498 to 508 (RTAKYTMEGKG) and 535 to 544 (KALDAEDGKR). Phosphoserine occurs at positions 546 and 549. Tyr582 bears the Phosphotyrosine mark. The residue at position 585 (Ser585) is a Phosphoserine. A compositionally biased stretch (polar residues) spans 592-603 (PSSSPSKVSNKF). Phosphoserine is present on residues Ser642, Ser655, Ser659, Ser676, and Ser680. 2 stretches are compositionally biased toward polar residues: residues 648 to 666 (TANS…QLNP) and 673 to 683 (STLSVSASPEK). Positions 686 to 697 (SRPSPLVLPSSR) are enriched in low complexity. A Phosphoserine modification is found at Ser716. Tyr729 is subject to Phosphotyrosine. Residues 789-817 (KASPAAEDASPSGYPYSGPPPPAYHYRNR) are disordered.

As to quaternary structure, interacts with EPS8. In terms of tissue distribution, widely expressed.

Its subcellular location is the golgi apparatus. The protein localises to the cytoplasmic vesicle. Functionally, acts as a GTPase-activating protein for RAB5A and RAB43. Involved in receptor trafficking. In complex with EPS8 inhibits internalization of EGFR. Involved in retrograde transport from the endocytic pathway to the Golgi apparatus. Involved in the transport of Shiga toxin from early and recycling endosomes to the trans-Golgi network. Required for structural integrity of the Golgi complex. This is USP6 N-terminal-like protein (USP6NL) from Homo sapiens (Human).